We begin with the raw amino-acid sequence, 301 residues long: Large ribosomal subunit protein uL18 (301 aa).

This sequence belongs to the universal ribosomal protein uL18 family. Component of the large ribosomal subunit (LSU). Mature N.crassa ribosomes consist of a small (40S) and a large (60S) subunit. The 40S small subunit contains 1 molecule of ribosomal RNA (18S rRNA) and at least 32 different proteins. The large 60S subunit contains 3 rRNA molecules (26S, 5.8S and 5S rRNA) and at least 42 different proteins.

The protein resides in the cytoplasm. Component of the ribosome, a large ribonucleoprotein complex responsible for the synthesis of proteins in the cell. The small ribosomal subunit (SSU) binds messenger RNAs (mRNAs) and translates the encoded message by selecting cognate aminoacyl-transfer RNA (tRNA) molecules. The large subunit (LSU) contains the ribosomal catalytic site termed the peptidyl transferase center (PTC), which catalyzes the formation of peptide bonds, thereby polymerizing the amino acids delivered by tRNAs into a polypeptide chain. The nascent polypeptides leave the ribosome through a tunnel in the LSU and interact with protein factors that function in enzymatic processing, targeting, and the membrane insertion of nascent chains at the exit of the ribosomal tunnel. The polypeptide is Large ribosomal subunit protein uL18 (rpl-5) (Neurospora crassa (strain ATCC 24698 / 74-OR23-1A / CBS 708.71 / DSM 1257 / FGSC 987)).